Reading from the N-terminus, the 80-residue chain is Transcription elongation factor 1 homolog (80 aa).

Residues cysteine 25, cysteine 28, cysteine 49, and cysteine 52 each contribute to the Zn(2+) site.

Belongs to the ELOF1 family.

The protein resides in the nucleus. Functionally, transcription elongation factor implicated in the maintenance of proper chromatin structure in actively transcribed regions. The protein is Transcription elongation factor 1 homolog of Encephalitozoon cuniculi (strain GB-M1) (Microsporidian parasite).